A 77-amino-acid polypeptide reads, in one-letter code: Putative antitoxin VapB3 (77 aa).

It belongs to the UPF0330 family.

Functionally, possibly the antitoxin component of a type II toxin-antitoxin (TA) system. Its cognate toxin is VapC3 (Potential). This Methanocaldococcus jannaschii (strain ATCC 43067 / DSM 2661 / JAL-1 / JCM 10045 / NBRC 100440) (Methanococcus jannaschii) protein is Putative antitoxin VapB3 (vapB3).